The sequence spans 173 residues: MELVLGYLFIFVARVTDVGMGTVRMIMVVKGKRIQAAAIGFVESIIYILAIGKVLEALDNPVNILVYATGFAAGNYVGIYIEERMALGNIIAQVMCDHNVMQLVDLLRDAGFGVTVVEGYGRTGIRHLLNVSLQRKNLSKLYNVLDTHDHKAFITVTDARSIRGGYFTSVKKK.

3 consecutive transmembrane segments (helical) span residues 3-23 (LVLG…MGTV), 38-58 (AIGF…LEAL), and 61-81 (PVNI…GIYI).

The protein belongs to the UPF0316 family.

It is found in the cell membrane. The sequence is that of UPF0316 protein Amet_0954 from Alkaliphilus metalliredigens (strain QYMF).